The primary structure comprises 400 residues: Enoyl-[acyl-carrier-protein] reductase [NADH] 1 (400 aa).

Residues Gly48–Tyr53, Phe74–Glu75, Asp111–Ala112, and Leu139–Ala140 each bind NAD(+). Tyr225 is a binding site for substrate. Catalysis depends on Tyr235, which acts as the Proton donor. Residues Lys244 and Val273–Thr275 each bind NAD(+).

This sequence belongs to the TER reductase family. Monomer.

The catalysed reaction is a 2,3-saturated acyl-[ACP] + NAD(+) = a (2E)-enoyl-[ACP] + NADH + H(+). It participates in lipid metabolism; fatty acid biosynthesis. In terms of biological role, involved in the final reduction of the elongation cycle of fatty acid synthesis (FAS II). Catalyzes the reduction of a carbon-carbon double bond in an enoyl moiety that is covalently linked to an acyl carrier protein (ACP). The polypeptide is Enoyl-[acyl-carrier-protein] reductase [NADH] 1 (Vibrio vulnificus (strain CMCP6)).